The sequence spans 281 residues: Bis(5'-nucleosyl)-tetraphosphatase, symmetrical (281 aa).

Belongs to the Ap4A hydrolase family.

It catalyses the reaction P(1),P(4)-bis(5'-adenosyl) tetraphosphate + H2O = 2 ADP + 2 H(+). Its function is as follows. Hydrolyzes diadenosine 5',5'''-P1,P4-tetraphosphate to yield ADP. In Pectobacterium atrosepticum (strain SCRI 1043 / ATCC BAA-672) (Erwinia carotovora subsp. atroseptica), this protein is Bis(5'-nucleosyl)-tetraphosphatase, symmetrical.